Consider the following 845-residue polypeptide: Proto-oncogene vav (845 aa).

A Calponin-homology (CH) domain is found at 1–119; it reads MELWRQCTHW…YTLSALSWTP (119 aa). The DH domain occupies 194 to 373; that stretch reads KRCCCLREIQ…RDLAQCVNEV (180 aa). The PH domain occupies 402–504; the sequence is RPKIDGELKI…WMEQFEMAIS (103 aa). Residues 515–564 form a Phorbol-ester/DAG-type zinc finger; that stretch reads GHDFQMFSFEETTSCKACQMLLRGTFYQGYRCHRCRASAHKECLGRVPPC. One can recognise an SH3 1 domain in the interval 592 to 660; sequence LGLPKMEVFQ…PCNRVKPYVH (69 aa). An SH2 domain is found at 671–765; it reads WYAGPMERAG…SLDTTLQFPF (95 aa). The SH3 2 domain occupies 782–842; the sequence is KYFGTAKARY…PANYVEEDYS (61 aa). Phosphotyrosine occurs at positions 826 and 844.

In terms of assembly, interacts with SHB. Interacts with SH2B2, GRB2, GRB3, DOCK2, SLA, TEC and ZNF655/VIK. Interacts with SIAH2; without leading to its degradation. Associates with BLNK, PLCG1, GRB2 and NCK1 in a B-cell antigen receptor-dependent fashion. Interacts with CBLB; which inhibits tyrosine phosphorylation and down-regulates activity. May interact with CCPG1. Interacts with CLNK. Interacts with THEMIS2. Interacts with NEK3 and this interaction is prolactin-dependent. Interacts with ITK. Interacts with PTK2B/PYK2. Interacts with HCK. Interacts with PTK2B/PYK2. Interacts (via SH2 domain) with SYK. Interacts with ANKRD54. Interacts with CD6. Interacts with isoform 2 of CRACR2A. Interacts with LCP2; this interaction plays a role in TCR-mediated cytokine production. Phosphorylated on tyrosine residues by HCK in response to IFNG and bacterial lipopolysaccharide (LPS). Phosphorylated by FYN. As to expression, widely expressed in hematopoietic cells but not in other cell types.

Functionally, couples tyrosine kinase signals with the activation of the Rho/Rac GTPases, thus leading to cell differentiation and/or proliferation. The protein is Proto-oncogene vav (VAV1) of Homo sapiens (Human).